The following is a 70-amino-acid chain: U2-agatoxin-Ao1n (70 aa).

Positions Met-1 to Ala-20 are cleaved as a signal peptide. Residues Val-21–Arg-34 constitute a propeptide that is removed on maturation. 3 disulfide bridges follow: Cys-37–Cys-53, Cys-44–Cys-58, and Cys-52–Cys-68. Residue Leu-69 is modified to Leucine amide.

This sequence belongs to the neurotoxin 01 (U2-agtx) family. As to expression, expressed by the venom gland.

Its subcellular location is the secreted. Its function is as follows. Insect active toxin causing rapid but reversible paralysis in crickets. No activity shown in mammals. Does not show effect on mammalian voltage-gated calcium channels. The polypeptide is U2-agatoxin-Ao1n (Agelena orientalis (Funnel-web spider)).